The following is a 382-amino-acid chain: Type 2 DNA topoisomerase 6 subunit A (382 aa).

The region spanning 14–155 (YDPQKVLKKL…MHITADRRGY (142 aa)) is the Topo IIA-type catalytic domain. Catalysis depends on Tyr-108, which acts as the O-(5'-phospho-DNA)-tyrosine intermediate. Residues Glu-202 and Asp-254 each coordinate Mg(2+).

The protein belongs to the TOP6A family. In terms of assembly, homodimer. Heterotetramer of two Top6A and two Top6B chains. Mg(2+) serves as cofactor.

It carries out the reaction ATP-dependent breakage, passage and rejoining of double-stranded DNA.. In terms of biological role, relaxes both positive and negative superturns and exhibits a strong decatenase activity. This Pyrococcus horikoshii (strain ATCC 700860 / DSM 12428 / JCM 9974 / NBRC 100139 / OT-3) protein is Type 2 DNA topoisomerase 6 subunit A.